The primary structure comprises 448 residues: GA-binding protein subunit beta-2 (448 aa).

ANK repeat units follow at residues 5–34 (DLGK…PFTT), 37–66 (LGTS…SRDA), 70–99 (VDRT…DVNA), 103–132 (LKMT…DVHA), and 136–166 (FDKS…QVNV). The residue at position 256 (Ser-256) is a Phosphoserine. Disordered regions lie at residues 325-354 (EEEE…GNER) and 420-448 (ELEE…TVSS). Positions 337 to 354 (RIGEKTNSVEESKEGNER) are enriched in basic and acidic residues. Residues 345–395 (VEESKEGNERELLQQQLQEANRRAQEYRHQLLKKEQEAEQYRLKLEAIARQ) are a coiled coil. Over residues 428–448 (VTGSAGTTEPHTRVSMATVSS) the composition is skewed to polar residues.

Heterotetramer of two alpha and two beta subunits. The C-terminal is necessary for the formation of a heterotetrameric GABP-alpha-2/beta-2 complex, and also facilitates homotypic dimerization. Interacts with ADGRB2.

The protein localises to the nucleus. Functionally, may function as transcription factor capable of interacting with purine rich repeats (GA repeats). The chain is GA-binding protein subunit beta-2 (GABPB2) from Homo sapiens (Human).